A 421-amino-acid chain; its full sequence is Medium-chain specific acyl-CoA dehydrogenase, mitochondrial (421 aa).

The N-terminal 25 residues, 1 to 25, are a transit peptide targeting the mitochondrion; it reads MAAAFGRCCRVLRSISRFHWRSQHT. The residue at position 69 (Lys69) is an N6-acetyllysine; alternate. Lys69 carries the N6-succinyllysine; alternate modification. 158 to 167 lines the FAD pocket; that stretch reads YCVTEPGAGS. Position 167 (Ser167) interacts with octanoyl-CoA. The residue at position 179 (Lys179) is an N6-succinyllysine. 191-193 serves as a coordination point for FAD; it reads WIT. Residues Lys212, Lys217, Lys259, and Lys271 each carry the N6-acetyllysine; alternate modification. N6-succinyllysine; alternate is present on residues Lys212, Lys217, Lys259, and Lys271. Asp278 serves as a coordination point for octanoyl-CoA. The residue at position 279 (Lys279) is an N6-acetyllysine. Residue Arg281 participates in octanoyl-CoA binding. Lys301 bears the N6-acetyllysine mark. Residues 306–308 and 316–317 contribute to the FAD site; these read RKT and HQ. The octanoyl-CoA site is built by Arg349 and Thr351. Phosphothreonine is present on Thr351. An FAD-binding site is contributed by 374 to 378; that stretch reads QIFGG. Glu401 contacts octanoyl-CoA. Glu401 serves as the catalytic Proton acceptor. 402–405 lines the FAD pocket; sequence GTSQ.

Belongs to the acyl-CoA dehydrogenase family. In terms of assembly, homotetramer. Interacts with the heterodimeric electron transfer flavoprotein ETF. The cofactor is FAD. Post-translationally, acetylated. Could occur at proximity of the cofactor-binding sites and reduce the catalytic activity. Could be deacetylated by SIRT3.

It is found in the mitochondrion matrix. It catalyses the reaction a medium-chain 2,3-saturated fatty acyl-CoA + oxidized [electron-transfer flavoprotein] + H(+) = a medium-chain (2E)-enoyl-CoA + reduced [electron-transfer flavoprotein]. The enzyme catalyses pentanoyl-CoA + oxidized [electron-transfer flavoprotein] + H(+) = (2E)-pentenoyl-CoA + reduced [electron-transfer flavoprotein]. The catalysed reaction is hexanoyl-CoA + oxidized [electron-transfer flavoprotein] + H(+) = (2E)-hexenoyl-CoA + reduced [electron-transfer flavoprotein]. It carries out the reaction octanoyl-CoA + oxidized [electron-transfer flavoprotein] + H(+) = (2E)-octenoyl-CoA + reduced [electron-transfer flavoprotein]. It catalyses the reaction decanoyl-CoA + oxidized [electron-transfer flavoprotein] + H(+) = (2E)-decenoyl-CoA + reduced [electron-transfer flavoprotein]. The enzyme catalyses dodecanoyl-CoA + oxidized [electron-transfer flavoprotein] + H(+) = (2E)-dodecenoyl-CoA + reduced [electron-transfer flavoprotein]. The catalysed reaction is tetradecanoyl-CoA + oxidized [electron-transfer flavoprotein] + H(+) = (2E)-tetradecenoyl-CoA + reduced [electron-transfer flavoprotein]. It carries out the reaction oxidized [electron-transfer flavoprotein] + hexadecanoyl-CoA + H(+) = (2E)-hexadecenoyl-CoA + reduced [electron-transfer flavoprotein]. Its pathway is lipid metabolism; mitochondrial fatty acid beta-oxidation. In terms of biological role, medium-chain specific acyl-CoA dehydrogenase is one of the acyl-CoA dehydrogenases that catalyze the first step of mitochondrial fatty acid beta-oxidation, an aerobic process breaking down fatty acids into acetyl-CoA and allowing the production of energy from fats. The first step of fatty acid beta-oxidation consists in the removal of one hydrogen from C-2 and C-3 of the straight-chain fatty acyl-CoA thioester, resulting in the formation of trans-2-enoyl-CoA. Electron transfer flavoprotein (ETF) is the electron acceptor that transfers electrons to the main mitochondrial respiratory chain via ETF-ubiquinone oxidoreductase (ETF dehydrogenase). Among the different mitochondrial acyl-CoA dehydrogenases, medium-chain specific acyl-CoA dehydrogenase acts specifically on acyl-CoAs with saturated 6 to 12 carbons long primary chains. This chain is Medium-chain specific acyl-CoA dehydrogenase, mitochondrial, found in Macaca fascicularis (Crab-eating macaque).